We begin with the raw amino-acid sequence, 679 residues long: UvrABC system protein B (679 aa).

One can recognise a Helicase ATP-binding domain in the interval 25–176 (KGVNTGKEFQ…NLRSYLRSLV (152 aa)). ATP is bound at residue 38–45 (GATGTGKT). The short motif at 91 to 114 (YYDYYQPEAYVPVSDTYIAKTASI) is the Beta-hairpin element. The 155-residue stretch at 429 to 583 (QIEDLLSEIR…KKYNQVNGIT (155 aa)) folds into the Helicase C-terminal domain. Positions 639-674 (PDLIEKLEIKMKDAAKELNFEEAANLRDRIKKLRQK) constitute a UVR domain.

It belongs to the UvrB family. As to quaternary structure, forms a heterotetramer with UvrA during the search for lesions. Interacts with UvrC in an incision complex.

It is found in the cytoplasm. Functionally, the UvrABC repair system catalyzes the recognition and processing of DNA lesions. A damage recognition complex composed of 2 UvrA and 2 UvrB subunits scans DNA for abnormalities. Upon binding of the UvrA(2)B(2) complex to a putative damaged site, the DNA wraps around one UvrB monomer. DNA wrap is dependent on ATP binding by UvrB and probably causes local melting of the DNA helix, facilitating insertion of UvrB beta-hairpin between the DNA strands. Then UvrB probes one DNA strand for the presence of a lesion. If a lesion is found the UvrA subunits dissociate and the UvrB-DNA preincision complex is formed. This complex is subsequently bound by UvrC and the second UvrB is released. If no lesion is found, the DNA wraps around the other UvrB subunit that will check the other stand for damage. The protein is UvrABC system protein B of Prochlorococcus marinus (strain MIT 9301).